Consider the following 184-residue polypeptide: Dual-action ribosomal maturation protein DarP (184 aa).

The disordered stretch occupies residues 1–27; that stretch reads MSIPDTEIPVDDDGYDENGYDRPSKSQ. A compositionally biased stretch (acidic residues) spans 8 to 18; the sequence is IPVDDDGYDEN.

Belongs to the DarP family.

The protein localises to the cytoplasm. Functionally, member of a network of 50S ribosomal subunit biogenesis factors which assembles along the 30S-50S interface, preventing incorrect 23S rRNA structures from forming. Promotes peptidyl transferase center (PTC) maturation. The protein is Dual-action ribosomal maturation protein DarP of Bordetella avium (strain 197N).